Consider the following 141-residue polypeptide: Histone H2B (141 aa).

Basic and acidic residues predominate over residues 1-10 (MAPKAAEKKP). The tract at residues 1-49 (MAPKAAEKKPSTGGKAPAGGKAPAEKKEAGKKTAAAASGDKKKRGKTRK) is disordered. N6-acetyllysine; alternate occurs at positions 8 and 9. Residues K8 and K9 each participate in a glycyl lysine isopeptide (Lys-Gly) (interchain with G-Cter in SUMO); alternate cross-link. A compositionally biased stretch (low complexity) spans 11–22 (STGGKAPAGGKA). K15 bears the N6-acetyllysine mark. K26 bears the N6-acetyllysine; alternate mark. Residue K26 forms a Glycyl lysine isopeptide (Lys-Gly) (interchain with G-Cter in SUMO); alternate linkage. A Glycyl lysine isopeptide (Lys-Gly) (interchain with G-Cter in SUMO) cross-link involves residue K27. K135 is covalently cross-linked (Glycyl lysine isopeptide (Lys-Gly) (interchain with G-Cter in ubiquitin)).

This sequence belongs to the histone H2B family. The nucleosome is a histone octamer containing two molecules each of H2A, H2B, H3 and H4 assembled in one H3-H4 heterotetramer and two H2A-H2B heterodimers. The octamer wraps approximately 147 bp of DNA. Post-translationally, monoubiquitinated by the ubc2-bre1 complex to form H2BK123ub1. H2BK123ub1 gives a specific tag for epigenetic transcriptional activation and is also prerequisite for H3K4me and H3K79me formation. H2BK123ub1 also modulates the formation of double-strand breaks during meiosis and is a prerequisite for DNA-damage checkpoint activation. In terms of processing, acetylated by gcn5 to form H2BK11ac and H2BK16ac. H2BK16ac can also be formed by esa1. Acetylation of N-terminal lysines and particularly formation of H2BK11acK16ac has a positive effect on transcription. Sumoylation to form H2BK6su or H2BK7su, and probably also H2BK16su or H2BK17su, occurs preferentially near the telomeres and represses gene transcription.

The protein resides in the nucleus. It localises to the chromosome. Its function is as follows. Core component of nucleosome. Nucleosomes wrap and compact DNA into chromatin, limiting DNA accessibility to the cellular machineries which require DNA as a template. Histones thereby play a central role in transcription regulation, DNA repair, DNA replication and chromosomal stability. DNA accessibility is regulated via a complex set of post-translational modifications of histones, also called histone code, and nucleosome remodeling. The sequence is that of Histone H2B (htb1) from Aspergillus oryzae (strain ATCC 42149 / RIB 40) (Yellow koji mold).